Consider the following 705-residue polypeptide: Translation initiation factor IF-2 (705 aa).

The segment at 40–124 is disordered; sequence DDQIKALDKK…QPAAPKEIPS (85 aa). A compositionally biased stretch (basic and acidic residues) spans 41 to 58; sequence DQIKALDKKFKKEQKNDN. Positions 59-77 are enriched in low complexity; sequence KQSTQNNHQKSNNQNQNKG. The span at 94 to 108 shows a compositional bias: basic residues; it reads KGNKKNNRNNKKNNK. In terms of domain architecture, tr-type G spans 207–376; that stretch reads ERPAVVTIMG…GLVAEVQELK (170 aa). The segment at 216–223 is G1; the sequence is GHVDHGKT. GTP is bound at residue 216–223; it reads GHVDHGKT. A G2 region spans residues 241–245; the sequence is GITQH. Positions 262-265 are G3; the sequence is DTPG. GTP is bound by residues 262 to 266 and 316 to 319; these read DTPGH and NKID. The tract at residues 316–319 is G4; the sequence is NKID. Positions 352–354 are G5; the sequence is SAL.

This sequence belongs to the TRAFAC class translation factor GTPase superfamily. Classic translation factor GTPase family. IF-2 subfamily.

The protein resides in the cytoplasm. Its function is as follows. One of the essential components for the initiation of protein synthesis. Protects formylmethionyl-tRNA from spontaneous hydrolysis and promotes its binding to the 30S ribosomal subunits. Also involved in the hydrolysis of GTP during the formation of the 70S ribosomal complex. The sequence is that of Translation initiation factor IF-2 from Staphylococcus aureus (strain MRSA252).